A 134-amino-acid polypeptide reads, in one-letter code: Putative membrane protein insertion efficiency factor (134 aa).

It belongs to the UPF0161 family.

The protein localises to the cell inner membrane. In terms of biological role, could be involved in insertion of integral membrane proteins into the membrane. This chain is Putative membrane protein insertion efficiency factor, found in Rhizobium etli (strain ATCC 51251 / DSM 11541 / JCM 21823 / NBRC 15573 / CFN 42).